Reading from the N-terminus, the 262-residue chain is MRIDIITIFPDYFTPLDLSLIGKARRSGLIDVRLHDLRRWTYDRHHTVDDTPYGGGPGMVMKPEPWGEALDEITADADAGTPRLILPTPSGLPFTQQDAVRLAKEPWLIFACGRYEGIDARVAVDAAQRMPVEELSIGDYVLNGGEVATLVIVEAISRLLPGVLGNVESITQDSFAPGTMDNLVEGPVYTKPPVWRGHEVPPILLSGHHAAIDRWRRDEALRKTARNRPDLIRRLDPESLDKRDREVLAEVGLQETSEPVAD.

S-adenosyl-L-methionine-binding positions include Gly113 and 137–142 (IGDYVL).

This sequence belongs to the RNA methyltransferase TrmD family. In terms of assembly, homodimer.

It is found in the cytoplasm. It catalyses the reaction guanosine(37) in tRNA + S-adenosyl-L-methionine = N(1)-methylguanosine(37) in tRNA + S-adenosyl-L-homocysteine + H(+). In terms of biological role, specifically methylates guanosine-37 in various tRNAs. This Thermobifida fusca (strain YX) protein is tRNA (guanine-N(1)-)-methyltransferase.